A 701-amino-acid polypeptide reads, in one-letter code: ER-retained PMA1-suppressing protein 1 (701 aa).

The signal sequence occupies residues 1 to 27 (MKMNLKRLVVTFFSCITFLLKFTIAAA). The region spanning 28–142 (EPPEGFPEPL…LIAFARRESM (115 aa)) is the Thioredoxin 1 domain. A disulfide bridge connects residues Cys-60 and Cys-63. An N-linked (GlcNAc...) asparagine glycan is attached at Asn-85. Cysteines 200 and 203 form a disulfide. Residues Asn-264, Asn-299, and Asn-370 are each glycosylated (N-linked (GlcNAc...) asparagine). In terms of domain architecture, Thioredoxin 2 spans 408-446 (PTFFMFKDGDPISYVFPGYSTTEMRNIDAIMDWVKKYSN). The helical transmembrane segment at 646 to 666 (IIHGNGMPGYLIVIVLFIAIL) threads the bilayer.

It belongs to the protein disulfide isomerase family. In terms of assembly, interacts with mutated PMA1-D378N but not wild type PMA1. Interacts with EUG1, KAR2, MPD1 and PDI1.

The protein localises to the endoplasmic reticulum membrane. The catalysed reaction is Catalyzes the rearrangement of -S-S- bonds in proteins.. Acts as a membrane-bound chaperone in endoplasmic reticulum quality control. Probably facilitates presentation of substrate to membrane-bound components of the degradation machinery. The protein is ER-retained PMA1-suppressing protein 1 (EPS1) of Saccharomyces cerevisiae (strain ATCC 204508 / S288c) (Baker's yeast).